Reading from the N-terminus, the 316-residue chain is tRNA dimethylallyltransferase (316 aa).

17–24 (GPTASGKT) is a binding site for ATP. 19 to 24 (TASGKT) is a binding site for substrate. 4 interaction with substrate tRNA regions span residues 42–45 (DSAL), 166–170 (QRLSR), 247–252 (RCVGYR), and 280–287 (KRQITWLR).

It belongs to the IPP transferase family. In terms of assembly, monomer. It depends on Mg(2+) as a cofactor.

It carries out the reaction adenosine(37) in tRNA + dimethylallyl diphosphate = N(6)-dimethylallyladenosine(37) in tRNA + diphosphate. Catalyzes the transfer of a dimethylallyl group onto the adenine at position 37 in tRNAs that read codons beginning with uridine, leading to the formation of N6-(dimethylallyl)adenosine (i(6)A). The polypeptide is tRNA dimethylallyltransferase (Shigella dysenteriae serotype 1 (strain Sd197)).